The chain runs to 287 residues: RxLR effector protein Avr4 (287 aa).

The signal sequence occupies residues 1–24 (MRSLHILLVFTASLLASLTESAKA). Residues 42-55 (RFLRAQTDEKNEER) carry the RxLR-dEER motif. Residues 115–138 (KYERMQWQKLKEGETLTFMRLGDR) form a W1 motif region. Positions 148-171 (QLLRWVAQKKPVESVYDDLQVAGF) are W2 motif. The tract at residues 221–244 (LFEKWAMEGTHIKSVITTLKLNGK) is W3 motif. The interval 246–267 (ASEMANNENFPALLKYVKLYLD) is y motif.

Belongs to the RxLR effector family.

The protein resides in the secreted. The protein localises to the host cytoplasm. It is found in the host nucleus. Its subcellular location is the host nucleolus. It localises to the host cytoskeleton. Functionally, secreted effector that acts as an elicitor of hypersensitive response (HR) specifically on plants carrying defense protein R4, through its interaction with this protein. This Phytophthora infestans (strain T30-4) (Potato late blight agent) protein is RxLR effector protein Avr4.